The chain runs to 152 residues: 3-dehydroquinate dehydratase (152 aa).

Y22 functions as the Proton acceptor in the catalytic mechanism. Residues N73, H79, and D86 each coordinate substrate. H99 functions as the Proton donor in the catalytic mechanism. Residues 100–101 and R110 each bind substrate; that span reads LS.

This sequence belongs to the type-II 3-dehydroquinase family. Homododecamer.

It carries out the reaction 3-dehydroquinate = 3-dehydroshikimate + H2O. The protein operates within metabolic intermediate biosynthesis; chorismate biosynthesis; chorismate from D-erythrose 4-phosphate and phosphoenolpyruvate: step 3/7. In terms of biological role, catalyzes a trans-dehydration via an enolate intermediate. In Gemmatimonas aurantiaca (strain DSM 14586 / JCM 11422 / NBRC 100505 / T-27), this protein is 3-dehydroquinate dehydratase.